The chain runs to 197 residues: Nucleoside triphosphate pyrophosphatase (197 aa).

The active-site Proton acceptor is D75.

It belongs to the Maf family. A divalent metal cation is required as a cofactor.

The protein resides in the cytoplasm. The enzyme catalyses a ribonucleoside 5'-triphosphate + H2O = a ribonucleoside 5'-phosphate + diphosphate + H(+). The catalysed reaction is a 2'-deoxyribonucleoside 5'-triphosphate + H2O = a 2'-deoxyribonucleoside 5'-phosphate + diphosphate + H(+). Functionally, nucleoside triphosphate pyrophosphatase. May have a dual role in cell division arrest and in preventing the incorporation of modified nucleotides into cellular nucleic acids. The protein is Nucleoside triphosphate pyrophosphatase of Haemophilus ducreyi (strain 35000HP / ATCC 700724).